A 456-amino-acid chain; its full sequence is D-glycerate 3-kinase, chloroplastic (456 aa).

The N-terminal 63 residues, 1-63 (MAVAISGSSL…KFNDHVVNPS (63 aa)), are a transit peptide targeting the chloroplast. 215–222 (APQGCGKT) serves as a coordination point for ATP.

This sequence belongs to the GLYK kinase family.

Its subcellular location is the plastid. It is found in the chloroplast. It localises to the cytoplasm. The enzyme catalyses (R)-glycerate + ATP = (2R)-3-phosphoglycerate + ADP + H(+). The protein operates within photosynthesis; photorespiration; 3-phospho-D-glycerate from glycine: step 4/4. In terms of biological role, catalyzes the concluding reaction of the photorespiratory C2 cycle, an indispensable ancillary metabolic pathway to the photosynthetic C3 cycle that enables land plants to grow in an oxygen-containing atmosphere. Functionally, cytoplasmic D-glycerate 3-kinase that constitutes a photorespiratory bypass that alleviates fluctuating light-induced photoinhibition. The polypeptide is D-glycerate 3-kinase, chloroplastic (Arabidopsis thaliana (Mouse-ear cress)).